We begin with the raw amino-acid sequence, 97 residues long: Large ribosomal subunit protein bL28 (97 aa).

The protein belongs to the bacterial ribosomal protein bL28 family.

In Rickettsia peacockii (strain Rustic), this protein is Large ribosomal subunit protein bL28.